A 136-amino-acid polypeptide reads, in one-letter code: Large ribosomal subunit protein uL16 (136 aa).

This sequence belongs to the universal ribosomal protein uL16 family. Part of the 50S ribosomal subunit.

Functionally, binds 23S rRNA and is also seen to make contacts with the A and possibly P site tRNAs. The polypeptide is Large ribosomal subunit protein uL16 (Rickettsia massiliae (strain Mtu5)).